The sequence spans 289 residues: Zinc finger matrin-type protein 3 (289 aa).

2 consecutive Matrin-type zinc fingers follow at residues 70 to 100 and 147 to 177; these read LFCK…KLRN and DYCK…RLRL. Disordered regions lie at residues 180–202 and 265–289; these read AQSH…EGSE and ESKQ…GYVQ. The segment at 245-275 adopts a Matrin-type 3 zinc-finger fold; it reads FYCSMCNVGAGEEVEFRQHLESKQHKSKVSE. The span at 265-282 shows a compositional bias: basic and acidic residues; sequence ESKQHKSKVSEQRYRSEM.

Interacts with dsRNA. Highly expressed in brain, gut, lung, and testis.

The protein localises to the nucleus. It is found in the nucleolus. Acts as a bona fide target gene of p53/TP53. May play a role in the TP53-dependent growth regulatory pathway. May contribute to TP53-mediated apoptosis by regulation of TP53 expression and translocation to the nucleus and nucleolus. The chain is Zinc finger matrin-type protein 3 from Rattus norvegicus (Rat).